The following is a 206-amino-acid chain: Uridine kinase (206 aa).

9–16 (GGSGSGKT) serves as a coordination point for ATP.

It belongs to the uridine kinase family.

Its subcellular location is the cytoplasm. The catalysed reaction is uridine + ATP = UMP + ADP + H(+). The enzyme catalyses cytidine + ATP = CMP + ADP + H(+). Its pathway is pyrimidine metabolism; CTP biosynthesis via salvage pathway; CTP from cytidine: step 1/3. It functions in the pathway pyrimidine metabolism; UMP biosynthesis via salvage pathway; UMP from uridine: step 1/1. The sequence is that of Uridine kinase from Borrelia garinii subsp. bavariensis (strain ATCC BAA-2496 / DSM 23469 / PBi) (Borreliella bavariensis).